Reading from the N-terminus, the 253-residue chain is Troponin T, fast skeletal muscle isoforms (253 aa).

Acidic residues predominate over residues 1 to 25; the sequence is MSDTEEVEHGEEEYEEEEEVQEEEV. Disordered regions lie at residues 1-58 and 97-178; these read MSDT…DIQK and RAER…VLAE. Serine 2 is subject to N-acetylserine. Composition is skewed to basic and acidic residues over residues 46–58, 97–139, and 167–178; these read PEGEKVDFDDIQK, RAER…DDLK, and TARETKKKVLAE.

This sequence belongs to the troponin T family.

Its function is as follows. Troponin T is the tropomyosin-binding subunit of troponin, the thin filament regulatory complex which confers calcium-sensitivity to striated muscle actomyosin ATPase activity. This chain is Troponin T, fast skeletal muscle isoforms (TNNT3), found in Coturnix japonica (Japanese quail).